We begin with the raw amino-acid sequence, 117 residues long: Minor capsid protein p17 (117 aa).

Residue Asn-12 is glycosylated (N-linked (GlcNAc...) asparagine; by host). The chain crosses the membrane as a helical span at residues 39–59; the sequence is AILLGILILLVIILIIVAIVY. 2 N-linked (GlcNAc...) asparagine; by host glycosylation sites follow: Asn-61 and Asn-97.

Belongs to the asfivirus minor capsid protein p17 family. In terms of assembly, interacts with the minor capsid protein M1249L and with the hexon capsid protein p72 capsomers; these interactions form a rigid zipper structure that stabilizes the capsomers. Interacts with host STING1.

Its subcellular location is the virion membrane. The protein localises to the host endoplasmic reticulum membrane. It localises to the host Golgi apparatus membrane. In terms of biological role, together with the penton and the other minor capsid proteins (M1249L, p49), forms a complicated network immediately below the outer capsid shell, stabilizing the whole capsid. Three copies of p17 encircle each p72 capsomer in the inner capsid shell, anchoring p72 capsomers on the inner membrane. Required for the assembly of the capsid and icosahedral morphogenesis. Additionally, inhibits the host cGAS-STING pathway through its interaction with STING1 and subsequent interference of the recruitment of downstream components TBK1 and IKBKE. The polypeptide is Minor capsid protein p17 (African swine fever virus (strain Badajoz 1971 Vero-adapted) (Ba71V)).